Consider the following 497-residue polypeptide: Serine carboxypeptidase-like 20 (497 aa).

Positions 1 to 29 (MSIITMVWLMKVFVFVTLLSLVFVITESA) are cleaved as a signal peptide. 3 cysteine pairs are disulfide-bonded: C90–C386, C254–C266, and C289–C353. N-linked (GlcNAc...) asparagine glycans are attached at residues N111 and N146. S186 is an active-site residue. The N-linked (GlcNAc...) asparagine glycan is linked to N249. An N-linked (GlcNAc...) asparagine glycan is attached at N405. The active site involves D421. Residue N463 is glycosylated (N-linked (GlcNAc...) asparagine). Residue H474 is part of the active site. The short motif at 495–497 (SKI) is the Microbody targeting signal element.

The protein belongs to the peptidase S10 family. Ubiquitous.

Its subcellular location is the secreted. Functionally, probable carboxypeptidase. This Arabidopsis thaliana (Mouse-ear cress) protein is Serine carboxypeptidase-like 20 (SCPL20).